The primary structure comprises 1430 residues: DNA-directed RNA polymerase subunit beta' (1430 aa).

4 residues coordinate Zn(2+): Cys-71, Cys-73, Cys-86, and Cys-89. Residues Asp-461, Asp-463, and Asp-465 each contribute to the Mg(2+) site. Cys-815, Cys-889, Cys-896, and Cys-899 together coordinate Zn(2+). The segment at 1388–1430 is disordered; it reads RRQEAPAPAATPEQQAEEVFASLGQGEGEGPSPSDEASGPEVE. Over residues 1392 to 1405 the composition is skewed to low complexity; that stretch reads APAPAATPEQQAEE.

The protein belongs to the RNA polymerase beta' chain family. In terms of assembly, the RNAP catalytic core consists of 2 alpha, 1 beta, 1 beta' and 1 omega subunit. When a sigma factor is associated with the core the holoenzyme is formed, which can initiate transcription. Mg(2+) is required as a cofactor. It depends on Zn(2+) as a cofactor.

The enzyme catalyses RNA(n) + a ribonucleoside 5'-triphosphate = RNA(n+1) + diphosphate. DNA-dependent RNA polymerase catalyzes the transcription of DNA into RNA using the four ribonucleoside triphosphates as substrates. The polypeptide is DNA-directed RNA polymerase subunit beta' (Halorhodospira halophila (strain DSM 244 / SL1) (Ectothiorhodospira halophila (strain DSM 244 / SL1))).